The primary structure comprises 325 residues: Elongation factor P--(R)-beta-lysine ligase (325 aa).

76–78 is a binding site for substrate; sequence SPE. ATP-binding positions include 100–102 and N109; that span reads RNE. Y118 contacts substrate. 244-245 contributes to the ATP binding site; that stretch reads EL. E251 provides a ligand contact to substrate. Residue G300 coordinates ATP.

The protein belongs to the class-II aminoacyl-tRNA synthetase family. EpmA subfamily. Homodimer.

It catalyses the reaction D-beta-lysine + L-lysyl-[protein] + ATP = N(6)-((3R)-3,6-diaminohexanoyl)-L-lysyl-[protein] + AMP + diphosphate + H(+). Its function is as follows. With EpmB is involved in the beta-lysylation step of the post-translational modification of translation elongation factor P (EF-P). Catalyzes the ATP-dependent activation of (R)-beta-lysine produced by EpmB, forming a lysyl-adenylate, from which the beta-lysyl moiety is then transferred to the epsilon-amino group of a conserved specific lysine residue in EF-P. The polypeptide is Elongation factor P--(R)-beta-lysine ligase (Proteus mirabilis (strain HI4320)).